A 483-amino-acid chain; its full sequence is Glycogen synthase (483 aa).

Lys-15 serves as a coordination point for ADP-alpha-D-glucose.

It belongs to the glycosyltransferase 1 family. Bacterial/plant glycogen synthase subfamily.

The catalysed reaction is [(1-&gt;4)-alpha-D-glucosyl](n) + ADP-alpha-D-glucose = [(1-&gt;4)-alpha-D-glucosyl](n+1) + ADP + H(+). Its pathway is glycan biosynthesis; glycogen biosynthesis. Its function is as follows. Synthesizes alpha-1,4-glucan chains using ADP-glucose. The chain is Glycogen synthase from Petrotoga mobilis (strain DSM 10674 / SJ95).